Reading from the N-terminus, the 122-residue chain is Large ribosomal subunit protein uL14 (122 aa).

The protein belongs to the universal ribosomal protein uL14 family. In terms of assembly, part of the 50S ribosomal subunit. Forms a cluster with proteins L3 and L19. In the 70S ribosome, L14 and L19 interact and together make contacts with the 16S rRNA in bridges B5 and B8.

Binds to 23S rRNA. Forms part of two intersubunit bridges in the 70S ribosome. This is Large ribosomal subunit protein uL14 from Methylibium petroleiphilum (strain ATCC BAA-1232 / LMG 22953 / PM1).